Here is a 106-residue protein sequence, read N- to C-terminus: MSQEIAVIGSPDFTTGFRLAGVRKFENVPDEAKDDELDEAVTRTLEDEDVGIIVMHEDDLDHLSRNARQSVERSIEPTLVTLGGSGGASGLRDQIKRAIGIDLMDE.

It belongs to the V-ATPase F subunit family. As to quaternary structure, has multiple subunits with at least A(3), B(3), C, D, E, F, H, I and proteolipid K(x).

It is found in the cell membrane. Component of the A-type ATP synthase that produces ATP from ADP in the presence of a proton gradient across the membrane. This is A-type ATP synthase subunit F from Haloferax volcanii (strain ATCC 29605 / DSM 3757 / JCM 8879 / NBRC 14742 / NCIMB 2012 / VKM B-1768 / DS2) (Halobacterium volcanii).